The primary structure comprises 561 residues: Developmental and secondary metabolism regulator veA (561 aa).

Disordered stretches follow at residues 1–23, 41–60, and 258–361; these read MANR…RITR, ARAC…VDPP, and AYAR…PQGI. The segment covering 12 to 23 has biased composition (basic and acidic residues); the sequence is NETEHSVSRITR. A Velvet domain is found at 25-233; that stretch reads GKQLTYKLSV…AEQGCRVRIR (209 aa). The Nuclear localization signal signature appears at 39 to 44; that stretch reads ERARAC. Over residues 258-268 the composition is skewed to basic and acidic residues; it reads AYARSSDRFTT. Residues 324–339 are compositionally biased toward polar residues; that stretch reads SHSQTPSYQSHLSFGS. Residues 347 to 357 show a composition bias toward pro residues; it reads PHMPPTPPPVA. Residues 438–485 form a PEST region; it reads RPQTPNLPAMPPPKPLSNDYANHVVPSVECTSPGGSGGGGYDNVRGKR. Residues 491–524 form a disordered region; that stretch reads GPTYGKRSHEDTFGLDDRSMQNGMRPDTEPYPAY. A compositionally biased stretch (basic and acidic residues) spans 497–509; sequence RSHEDTFGLDDRS.

This sequence belongs to the velvet family. VeA subfamily. In terms of assembly, component of the heterotrimeric velvet complex composed of laeA, veA and velB; velA acting as a bridging protein between laeA and velB. Interacts with kapA. Interacts with vosA and velc.

It localises to the nucleus. The protein resides in the cytoplasm. In terms of biological role, component of the velvet transcription factor complex that controls sexual/asexual developmental ratio in response to light, promoting sexual development in the darkness while stimulating asexual sporulation under illumination. The velvet complex acts as a global regulator for secondary metabolite gene expression. Controls the expression of the penicillin gene cluster. Positively controls the expression of the class V chitinase chiB1. Positively controls the expression of the transcription factor atfA. Required for cell wall integrity and controls hyphal branching. The sequence is that of Developmental and secondary metabolism regulator veA from Penicillium rubens (strain ATCC 28089 / DSM 1075 / NRRL 1951 / Wisconsin 54-1255) (Penicillium chrysogenum).